A 419-amino-acid chain; its full sequence is Aminoacyltransferase FemB (419 aa).

The protein belongs to the FemABX family. As to quaternary structure, homodimer. Interacts with FemA.

It is found in the cytoplasm. It catalyses the reaction MurNAc-L-Ala-D-isoglutaminyl-L-Lys-(N(6)-tri-Gly)-D-Ala-D-Ala-diphospho-di-trans,octa-cis-undecaprenyl-GlcNAc + 2 glycyl-tRNA(Gly) = MurNAc-L-Ala-D-isoglutaminyl-L-Lys-(N(6)-penta-Gly)-D-Ala-D-Ala-diphospho-di-trans,octa-cis-undecaprenyl-GlcNAc + 2 tRNA(Gly) + 2 H(+). Functionally, catalyzes the formation of the pentaglycine interpeptide bridge, which is characteristic of the S.aureus peptidoglycan. Adds glycines 4 and 5 of the pentaglycine bridge, using glycyl-tRNA(Gly) as donor. Involved in resistance to methicillin. The protein is Aminoacyltransferase FemB (femB) of Staphylococcus aureus (strain NCTC 8325 / PS 47).